We begin with the raw amino-acid sequence, 103 residues long: Large ribosomal subunit protein bL21 (103 aa).

It belongs to the bacterial ribosomal protein bL21 family. As to quaternary structure, part of the 50S ribosomal subunit. Contacts protein L20.

Functionally, this protein binds to 23S rRNA in the presence of protein L20. The sequence is that of Large ribosomal subunit protein bL21 from Cupriavidus necator (strain ATCC 17699 / DSM 428 / KCTC 22496 / NCIMB 10442 / H16 / Stanier 337) (Ralstonia eutropha).